A 146-amino-acid chain; its full sequence is Hemoglobin subunit beta (146 aa).

In terms of domain architecture, Globin spans 2–146 (HWTAEEKSAI…VAHALAHQYH (145 aa)). Positions 63 and 92 each coordinate heme b.

This sequence belongs to the globin family. As to quaternary structure, heterotetramer of two alpha chains and two beta chains. Oxygenation results in dissociation to dimers. Red blood cells.

Involved in oxygen transport from the lung to the various peripheral tissues. The chain is Hemoglobin subunit beta (HBB) from Erythrolamprus miliaris (South American water snake).